The primary structure comprises 749 residues: Soluble starch synthase 2-1, chloroplastic/amyloplastic (749 aa).

The N-terminal 44 residues, 1-44, are a transit peptide targeting the chloroplast; it reads MAAAAVSSLLAPSGSCYSPGCHSCWGPGPGGGRRLPSPRRRPIT. ADP-alpha-D-glucose is bound at residue K272.

Belongs to the glycosyltransferase 1 family. Bacterial/plant glycogen synthase subfamily. As to expression, expressed in endosperm, leaves, and weakly in roots.

The protein localises to the plastid. Its subcellular location is the amyloplast. It localises to the chloroplast. It carries out the reaction [(1-&gt;4)-alpha-D-glucosyl](n) + ADP-alpha-D-glucose = [(1-&gt;4)-alpha-D-glucosyl](n+1) + ADP + H(+). It functions in the pathway glycan biosynthesis; starch biosynthesis. Functionally, may be involved in starch synthesis in endosperm amyloplasts and contribute to the deposition of transient starch in chloroplasts of leaves. The chain is Soluble starch synthase 2-1, chloroplastic/amyloplastic (SSII-1) from Oryza sativa subsp. japonica (Rice).